Reading from the N-terminus, the 363-residue chain is Phosphoserine aminotransferase (363 aa).

R42 contributes to the L-glutamate binding site. Pyridoxal 5'-phosphate is bound by residues 76–77, W102, T156, D175, and Q198; that span reads GR. K199 is modified (N6-(pyridoxal phosphate)lysine). Residue 240-241 participates in pyridoxal 5'-phosphate binding; the sequence is NT.

This sequence belongs to the class-V pyridoxal-phosphate-dependent aminotransferase family. SerC subfamily. As to quaternary structure, homodimer. The cofactor is pyridoxal 5'-phosphate.

It is found in the cytoplasm. The catalysed reaction is O-phospho-L-serine + 2-oxoglutarate = 3-phosphooxypyruvate + L-glutamate. It carries out the reaction 4-(phosphooxy)-L-threonine + 2-oxoglutarate = (R)-3-hydroxy-2-oxo-4-phosphooxybutanoate + L-glutamate. It functions in the pathway amino-acid biosynthesis; L-serine biosynthesis; L-serine from 3-phospho-D-glycerate: step 2/3. It participates in cofactor biosynthesis; pyridoxine 5'-phosphate biosynthesis; pyridoxine 5'-phosphate from D-erythrose 4-phosphate: step 3/5. Its function is as follows. Catalyzes the reversible conversion of 3-phosphohydroxypyruvate to phosphoserine and of 3-hydroxy-2-oxo-4-phosphonooxybutanoate to phosphohydroxythreonine. The chain is Phosphoserine aminotransferase from Shewanella sp. (strain ANA-3).